The sequence spans 277 residues: Ribonuclease HII (277 aa).

The RNase H type-2 domain occupies 20-250 (KLIIGLDEAG…SKKLLKKIED (231 aa)). D26, E27, and D141 together coordinate a divalent metal cation.

The protein belongs to the RNase HII family. Requires Mn(2+) as cofactor. The cofactor is Mg(2+).

The protein resides in the cytoplasm. It carries out the reaction Endonucleolytic cleavage to 5'-phosphomonoester.. Endonuclease that specifically degrades the RNA of RNA-DNA hybrids. The polypeptide is Ribonuclease HII (Methanococcus aeolicus (strain ATCC BAA-1280 / DSM 17508 / OCM 812 / Nankai-3)).